The chain runs to 150 residues: MKQTTLIAAKDIKKNWYIVDAAGQNVGRLSTEVARILRGKHKVDFTPHMNNGDHVIIINAEKVLFTGKKESDKTYYHHSMHPGGLRRRTVAVQRELDATKILERSIRLMLPKNVQGRNQFRALHVFVGENHPYAAQKPEVLTFVKKGDNK.

This sequence belongs to the universal ribosomal protein uL13 family. In terms of assembly, part of the 50S ribosomal subunit.

Functionally, this protein is one of the early assembly proteins of the 50S ribosomal subunit, although it is not seen to bind rRNA by itself. It is important during the early stages of 50S assembly. This is Large ribosomal subunit protein uL13 from Mesoplasma florum (strain ATCC 33453 / NBRC 100688 / NCTC 11704 / L1) (Acholeplasma florum).